Here is a 99-residue protein sequence, read N- to C-terminus: DNA-directed RNA polymerase subunit omega (99 aa).

Belongs to the RNA polymerase subunit omega family. As to quaternary structure, the RNAP catalytic core consists of 2 alpha, 1 beta, 1 beta' and 1 omega subunit. When a sigma factor is associated with the core the holoenzyme is formed, which can initiate transcription.

The catalysed reaction is RNA(n) + a ribonucleoside 5'-triphosphate = RNA(n+1) + diphosphate. In terms of biological role, promotes RNA polymerase assembly. Latches the N- and C-terminal regions of the beta' subunit thereby facilitating its interaction with the beta and alpha subunits. In Deinococcus geothermalis (strain DSM 11300 / CIP 105573 / AG-3a), this protein is DNA-directed RNA polymerase subunit omega.